Here is a 212-residue protein sequence, read N- to C-terminus: Small ribosomal subunit protein eS1 (212 aa).

This sequence belongs to the eukaryotic ribosomal protein eS1 family.

The chain is Small ribosomal subunit protein eS1 from Ignicoccus hospitalis (strain KIN4/I / DSM 18386 / JCM 14125).